Reading from the N-terminus, the 232-residue chain is Clarin-1 (232 aa).

The helical transmembrane segment at 8 to 28 threads the bilayer; it reads IIFCMAGVLSFLCALGVVTAV. Asn-48 carries N-linked (GlcNAc...) asparagine glycosylation. Helical transmembrane passes span 101 to 121 and 135 to 155; these read IILF…FFMY and LGLY…MILF. N-linked (GlcNAc...) asparagine glycosylation occurs at Asn-184. Residues 186–206 form a helical membrane-spanning segment; it reads TTSFWVVFICFFVHFLNGLLI.

It belongs to the clarin family.

The protein resides in the cell membrane. Its function is as follows. May have a role in the excitatory ribbon synapse junctions between hair cells and cochlear ganglion cells and presumably also in analogous synapses within the retina. The polypeptide is Clarin-1 (Clrn1) (Mus musculus (Mouse)).